Consider the following 315-residue polypeptide: G-box-binding factor 1 (315 aa).

Disordered stretches follow at residues 1–56 (MGTS…GSPS) and 93–268 (MPMP…RDEL). The span at 46–56 (PFFPSPVGSPS) shows a compositional bias: pro residues. Composition is skewed to polar residues over residues 133–164 (GSGN…QEQG) and 178–187 (ASSQSTTGEI). The 64-residue stretch at 222-285 (ELKRQKRKQS…DKLKSENNSI (64 aa)) folds into the bZIP domain. The basic motif stretch occupies residues 224 to 243 (KRQKRKQSNRESARRSRLRK). Residues 249–262 (QLQQRVESLSNENQ) are compositionally biased toward polar residues. Residues 250-285 (LQQRVESLSNENQSLRDELQRLSSECDKLKSENNSI) form a leucine-zipper region.

Belongs to the bZIP family. In terms of assembly, monomer and heterodimers with BZIP16 and BZIP68. Interacts with GIP1. Post-translationally, phosphorylated by CK2. Found in both light and dark grown leaves.

The protein resides in the nucleus. Functionally, binds to the G-box motif (5'-CCACGTGG-3') of the rbcS-1A gene promoter. G-box and G-box-like motifs are cis-acting elements defined in promoters of certain plant genes which are regulated by such diverse stimuli as light-induction or hormone control. Binds to the G-box motif 5'-CACGTG-3' of LHCB2.4 (At3g27690) promoter. May act as transcriptional activator in light-regulated expression of LHCB2.4. Probably binds DNA as monomer. DNA-binding activity is redox-dependent. This Arabidopsis thaliana (Mouse-ear cress) protein is G-box-binding factor 1 (GBF1).